Here is a 223-residue protein sequence, read N- to C-terminus: ATP synthase subunit a 1 (223 aa).

Helical transmembrane passes span 20 to 40, 78 to 98, 108 to 128, 174 to 194, and 196 to 216; these read LTIATTWALMLVLVGGSAFAS, YLPYLGTLFIFIAFSNLCTII, LSTTAALAMSVFVAVPLFGIA, MILAILLTVTPFVFPVLMSVL, and LLTGMVQAYIFSILATVYISA.

Belongs to the ATPase A chain family. F-type ATPases have 2 components, CF(1) - the catalytic core - and CF(0) - the membrane proton channel. CF(1) has five subunits: alpha(3), beta(3), gamma(1), delta(1), epsilon(1). CF(0) has four main subunits: a, b, b' and c.

It is found in the cell inner membrane. Functionally, key component of the proton channel; it plays a direct role in the translocation of protons across the membrane. The protein is ATP synthase subunit a 1 of Chlorobium luteolum (strain DSM 273 / BCRC 81028 / 2530) (Pelodictyon luteolum).